Consider the following 132-residue polypeptide: uncharacterized protein (132 aa).

Residues 10 to 30 traverse the membrane as a helical segment; that stretch reads LVLFFTIILIALCPFVYYLWD. Residues 50–79 are a coiled coil; sequence KNCSTEIEHAIEEHKRKNKEKKEAKEKRLA.

It is found in the membrane. This is an uncharacterized protein from Invertebrate iridescent virus 6 (IIV-6).